Here is a 185-residue protein sequence, read N- to C-terminus: ATP synthase subunit b, chloroplastic (185 aa).

The chain crosses the membrane as a helical span at residues 7 to 29; the sequence is SFVYLVGHCPFAGSFAFNTDILA.

The protein belongs to the ATPase B chain family. As to quaternary structure, F-type ATPases have 2 components, F(1) - the catalytic core - and F(0) - the membrane proton channel. F(1) has five subunits: alpha(3), beta(3), gamma(1), delta(1), epsilon(1). F(0) has four main subunits: a(1), b(1), b'(1) and c(10-14). The alpha and beta chains form an alternating ring which encloses part of the gamma chain. F(1) is attached to F(0) by a central stalk formed by the gamma and epsilon chains, while a peripheral stalk is formed by the delta, b and b' chains.

It is found in the plastid. The protein resides in the chloroplast thylakoid membrane. F(1)F(0) ATP synthase produces ATP from ADP in the presence of a proton or sodium gradient. F-type ATPases consist of two structural domains, F(1) containing the extramembraneous catalytic core and F(0) containing the membrane proton channel, linked together by a central stalk and a peripheral stalk. During catalysis, ATP synthesis in the catalytic domain of F(1) is coupled via a rotary mechanism of the central stalk subunits to proton translocation. Functionally, component of the F(0) channel, it forms part of the peripheral stalk, linking F(1) to F(0). The protein is ATP synthase subunit b, chloroplastic of Dioscorea elephantipes (Elephant's foot yam).